The sequence spans 364 residues: UDP-N-acetylglucosamine--N-acetylmuramyl-(pentapeptide) pyrophosphoryl-undecaprenol N-acetylglucosamine transferase (364 aa).

UDP-N-acetyl-alpha-D-glucosamine-binding positions include 14 to 16, Asn-126, Arg-163, Ser-190, Ile-246, 265 to 270, and Gln-291; these read TGG and ALTVSE.

The protein belongs to the glycosyltransferase 28 family. MurG subfamily.

The protein localises to the cell inner membrane. The enzyme catalyses di-trans,octa-cis-undecaprenyl diphospho-N-acetyl-alpha-D-muramoyl-L-alanyl-D-glutamyl-meso-2,6-diaminopimeloyl-D-alanyl-D-alanine + UDP-N-acetyl-alpha-D-glucosamine = di-trans,octa-cis-undecaprenyl diphospho-[N-acetyl-alpha-D-glucosaminyl-(1-&gt;4)]-N-acetyl-alpha-D-muramoyl-L-alanyl-D-glutamyl-meso-2,6-diaminopimeloyl-D-alanyl-D-alanine + UDP + H(+). Its pathway is cell wall biogenesis; peptidoglycan biosynthesis. Cell wall formation. Catalyzes the transfer of a GlcNAc subunit on undecaprenyl-pyrophosphoryl-MurNAc-pentapeptide (lipid intermediate I) to form undecaprenyl-pyrophosphoryl-MurNAc-(pentapeptide)GlcNAc (lipid intermediate II). The chain is UDP-N-acetylglucosamine--N-acetylmuramyl-(pentapeptide) pyrophosphoryl-undecaprenol N-acetylglucosamine transferase from Shewanella loihica (strain ATCC BAA-1088 / PV-4).